The chain runs to 62 residues: Photosystem II reaction center protein Z (62 aa).

Transmembrane regions (helical) follow at residues 8–28 (SVFALVAISFLLVVGVPVVLA) and 41–61 (FSGASLWIALVFLVGVLNSFI).

The protein belongs to the PsbZ family. As to quaternary structure, PSII is composed of 1 copy each of membrane proteins PsbA, PsbB, PsbC, PsbD, PsbE, PsbF, PsbH, PsbI, PsbJ, PsbK, PsbL, PsbM, PsbT, PsbY, PsbZ, Psb30/Ycf12, at least 3 peripheral proteins of the oxygen-evolving complex and a large number of cofactors. It forms dimeric complexes.

It is found in the plastid. The protein localises to the chloroplast thylakoid membrane. Functionally, may control the interaction of photosystem II (PSII) cores with the light-harvesting antenna, regulates electron flow through the 2 photosystem reaction centers. PSII is a light-driven water plastoquinone oxidoreductase, using light energy to abstract electrons from H(2)O, generating a proton gradient subsequently used for ATP formation. This is Photosystem II reaction center protein Z from Chaetosphaeridium globosum (Charophycean green alga).